Reading from the N-terminus, the 281-residue chain is Elongation factor 1-delta (281 aa).

Ala2 is modified (N-acetylalanine). The residue at position 17 (Lys17) is an N6-acetyllysine. A phosphoserine mark is found at Ser37, Ser44, Ser60, Ser86, and Ser106. A leucine-zipper region spans residues 80-115 (LVVRIASLEVENQSLRGVVQELQQAISKLEARLNVL). Lys107 is subject to N6-acetyllysine. At Lys117 the chain carries N6-acetyllysine; alternate. The residue at position 117 (Lys117) is an N6-succinyllysine; alternate. Positions 118 to 172 (SSPGHRATAPQTQHVSPMRQVEPPAKKPATPAEDDEDDDIDLFGSDNEEEDKEAA) are disordered. The residue at position 119 (Ser119) is a Phosphoserine. A Phosphothreonine modification is found at Thr129. Ser133 is subject to Phosphoserine. At Thr147 the chain carries Phosphothreonine. Positions 149–169 (AEDDEDDDIDLFGSDNEEEDK) are enriched in acidic residues. Ser162 is subject to Phosphoserine; by CK2. Residues 173 to 281 (QLREERLRQY…SVDIAAFNKI (109 aa)) form a catalytic (GEF) region.

The protein belongs to the EF-1-beta/EF-1-delta family. EF-1 is composed of 4 subunits: alpha, beta, delta isoform 1, and gamma. Isoform 2 interacts with HSF1 and NFE2L2.

Its subcellular location is the nucleus. Its function is as follows. EF-1-beta and EF-1-delta stimulate the exchange of GDP bound to EF-1-alpha to GTP, regenerating EF-1-alpha for another round of transfer of aminoacyl-tRNAs to the ribosome. In terms of biological role, regulates induction of heat-shock-responsive genes through association with heat shock transcription factors and direct DNA-binding at heat shock promoter elements (HSE). The sequence is that of Elongation factor 1-delta (EEF1D) from Macaca fascicularis (Crab-eating macaque).